A 156-amino-acid chain; its full sequence is Protein US1 (156 aa).

Disordered stretches follow at residues 90–114 (RSRS…SDGD) and 133–156 (ARRW…DSTS). A compositionally biased stretch (low complexity) spans 96–111 (AESGRSSSSSSVSVLS). Positions 147–156 (SQQAKNDSTS) are enriched in polar residues.

This is Protein US1 (US1) from Homo sapiens (Human).